The sequence spans 448 residues: tRNA(Ile)-lysidine synthase (448 aa).

30 to 35 (GGGADS) is an ATP binding site.

This sequence belongs to the tRNA(Ile)-lysidine synthase family.

It localises to the cytoplasm. It catalyses the reaction cytidine(34) in tRNA(Ile2) + L-lysine + ATP = lysidine(34) in tRNA(Ile2) + AMP + diphosphate + H(+). Its function is as follows. Ligates lysine onto the cytidine present at position 34 of the AUA codon-specific tRNA(Ile) that contains the anticodon CAU, in an ATP-dependent manner. Cytidine is converted to lysidine, thus changing the amino acid specificity of the tRNA from methionine to isoleucine. The chain is tRNA(Ile)-lysidine synthase from Idiomarina loihiensis (strain ATCC BAA-735 / DSM 15497 / L2-TR).